We begin with the raw amino-acid sequence, 342 residues long: L-threonine 3-dehydrogenase (342 aa).

C38 provides a ligand contact to Zn(2+). Active-site charge relay system residues include T40 and H43. H63 and E64 together coordinate Zn(2+). Residues I175, D195, R200, 263–265 (LGI), and 287–288 (VY) each bind NAD(+).

Belongs to the zinc-containing alcohol dehydrogenase family. As to quaternary structure, homotetramer. Zn(2+) serves as cofactor.

It localises to the cytoplasm. It carries out the reaction L-threonine + NAD(+) = (2S)-2-amino-3-oxobutanoate + NADH + H(+). It participates in amino-acid degradation; L-threonine degradation via oxydo-reductase pathway; glycine from L-threonine: step 1/2. Functionally, catalyzes the NAD(+)-dependent oxidation of L-threonine to 2-amino-3-ketobutyrate. In Ruegeria pomeroyi (strain ATCC 700808 / DSM 15171 / DSS-3) (Silicibacter pomeroyi), this protein is L-threonine 3-dehydrogenase.